Consider the following 314-residue polypeptide: Malate dehydrogenase (314 aa).

NAD(+) contacts are provided by residues 11–16 and Asp-35; that span reads GSGNIG. Arg-84 and Arg-90 together coordinate substrate. Residues Asn-97 and 120–122 each bind NAD(+); that span reads ITN. Asn-122 and Arg-153 together coordinate substrate. His-177 acts as the Proton acceptor in catalysis.

This sequence belongs to the LDH/MDH superfamily. MDH type 3 family.

The catalysed reaction is (S)-malate + NAD(+) = oxaloacetate + NADH + H(+). Its function is as follows. Catalyzes the reversible oxidation of malate to oxaloacetate. This is Malate dehydrogenase from Rickettsia africae (strain ESF-5).